The chain runs to 307 residues: MEAHKPVLFDEVMEGLAIRPDGIYVDGTFGRGGHSFGILQRLGPNGRLMAMDKDPDAVAVANKALFEDARFSIVHETFANLQKAVRDRGWEGKVNGILLDIGVSSPQLEDAKRGFSFSKDGPLDMRMNPKQSMDAASWINQAAMEDIRRVLWNYGEERFAKRIAQAIVNAREEKPITRTQELSDIVIKAYPQREIKKHPATRTFQAIRIFINRELDELRECLPQCLETLAVGGRLCVISFHSLEDRLVKRFIQKESRDHLPREIPILAKDIKHRLKPLGSLIRPTEAEIKKNPRARSARLRIVEKLS.

S-adenosyl-L-methionine is bound by residues 32 to 34 (GGH), Asp-52, Phe-78, Asp-100, and Gln-107.

Belongs to the methyltransferase superfamily. RsmH family.

The protein resides in the cytoplasm. The enzyme catalyses cytidine(1402) in 16S rRNA + S-adenosyl-L-methionine = N(4)-methylcytidine(1402) in 16S rRNA + S-adenosyl-L-homocysteine + H(+). Its function is as follows. Specifically methylates the N4 position of cytidine in position 1402 (C1402) of 16S rRNA. This is Ribosomal RNA small subunit methyltransferase H from Coxiella burnetii (strain CbuK_Q154) (Coxiella burnetii (strain Q154)).